The sequence spans 1295 residues: Phosphoribosylformylglycinamidine synthase (1295 aa).

A disordered region spans residues 305–327; it reads WPGAATGSGGEIRDEGATGRGAK. ATP is bound by residues 307-318, 386-388, and alanine 678; these read GAATGSGGEIRD and TGY. The Mg(2+) site is built by aspartate 679, glutamate 718, asparagine 722, and aspartate 884. Residue serine 886 participates in ATP binding. The Glutamine amidotransferase type-1 domain maps to 1042-1295; sequence VAVLREQGVN…IFRNARKQLG (254 aa). The active-site Nucleophile is cysteine 1135. Residues histidine 1260 and glutamate 1262 contribute to the active site.

The protein in the N-terminal section; belongs to the FGAMS family. As to quaternary structure, monomer.

It localises to the cytoplasm. It carries out the reaction N(2)-formyl-N(1)-(5-phospho-beta-D-ribosyl)glycinamide + L-glutamine + ATP + H2O = 2-formamido-N(1)-(5-O-phospho-beta-D-ribosyl)acetamidine + L-glutamate + ADP + phosphate + H(+). It participates in purine metabolism; IMP biosynthesis via de novo pathway; 5-amino-1-(5-phospho-D-ribosyl)imidazole from N(2)-formyl-N(1)-(5-phospho-D-ribosyl)glycinamide: step 1/2. In terms of biological role, phosphoribosylformylglycinamidine synthase involved in the purines biosynthetic pathway. Catalyzes the ATP-dependent conversion of formylglycinamide ribonucleotide (FGAR) and glutamine to yield formylglycinamidine ribonucleotide (FGAM) and glutamate. The polypeptide is Phosphoribosylformylglycinamidine synthase (Salmonella paratyphi A (strain ATCC 9150 / SARB42)).